The primary structure comprises 856 residues: Bifunctional uridylyltransferase/uridylyl-removing enzyme (856 aa).

The uridylyltransferase stretch occupies residues 1–320 (MTLSAAPLQH…YCQVPRVTQH (320 aa)). The uridylyl-removing stretch occupies residues 321-678 (ISEYFHAVNG…ARLADDHEGL (358 aa)). Residues 439 to 561 (VDEHILMVVR…VRTPRRLAAL (123 aa)) form the HD domain. ACT domains are found at residues 679 to 760 (QVLI…LPPQ) and 788 to 856 (ILSI…ALRI).

It belongs to the GlnD family. Mg(2+) serves as cofactor.

It carries out the reaction [protein-PII]-L-tyrosine + UTP = [protein-PII]-uridylyl-L-tyrosine + diphosphate. It catalyses the reaction [protein-PII]-uridylyl-L-tyrosine + H2O = [protein-PII]-L-tyrosine + UMP + H(+). Its activity is regulated as follows. Uridylyltransferase (UTase) activity is inhibited by glutamine, while glutamine activates uridylyl-removing (UR) activity. Modifies, by uridylylation and deuridylylation, the PII regulatory proteins (GlnB and homologs), in response to the nitrogen status of the cell that GlnD senses through the glutamine level. Under low glutamine levels, catalyzes the conversion of the PII proteins and UTP to PII-UMP and PPi, while under higher glutamine levels, GlnD hydrolyzes PII-UMP to PII and UMP (deuridylylation). Thus, controls uridylylation state and activity of the PII proteins, and plays an important role in the regulation of nitrogen assimilation and metabolism. This Chromobacterium violaceum (strain ATCC 12472 / DSM 30191 / JCM 1249 / CCUG 213 / NBRC 12614 / NCIMB 9131 / NCTC 9757 / MK) protein is Bifunctional uridylyltransferase/uridylyl-removing enzyme.